A 238-amino-acid chain; its full sequence is Probable transcriptional regulatory protein SAB0618 (238 aa).

It belongs to the TACO1 family. YeeN subfamily.

The protein localises to the cytoplasm. The sequence is that of Probable transcriptional regulatory protein SAB0618 from Staphylococcus aureus (strain bovine RF122 / ET3-1).